Consider the following 718-residue polypeptide: Polyribonucleotide nucleotidyltransferase (718 aa).

Residues D487 and D493 each contribute to the Mg(2+) site. In terms of domain architecture, KH spans 554 to 613 (PRIETFKIPTDKIREVIGTGGKVIREIVEKTGAKVNIEDDGTVKVASSDGESIKAAIKWI). The region spanning 623–691 (GEIYEGTVVK…DRGKTRLSMK (69 aa)) is the S1 motif domain. Positions 692–718 (VVDQETGEDLEAKQKAEGDAPREAAGE) are disordered. Over residues 701-718 (LEAKQKAEGDAPREAAGE) the composition is skewed to basic and acidic residues.

Belongs to the polyribonucleotide nucleotidyltransferase family. It depends on Mg(2+) as a cofactor.

The protein resides in the cytoplasm. It carries out the reaction RNA(n+1) + phosphate = RNA(n) + a ribonucleoside 5'-diphosphate. Functionally, involved in mRNA degradation. Catalyzes the phosphorolysis of single-stranded polyribonucleotides processively in the 3'- to 5'-direction. This chain is Polyribonucleotide nucleotidyltransferase, found in Nitrobacter winogradskyi (strain ATCC 25391 / DSM 10237 / CIP 104748 / NCIMB 11846 / Nb-255).